Consider the following 579-residue polypeptide: Thiol:disulfide interchange protein DsbD (579 aa).

The first 16 residues, 1–16 (MKKLFLFFTLIFTAFA), serve as a signal peptide directing secretion. 2 disulfides stabilise this stretch: Cys124–Cys129 and Cys193–Cys315. 8 consecutive transmembrane segments (helical) span residues 178-198 (IFGF…LPML), 230-250 (LTYT…QIAL), 254-274 (YVMI…FGLF), 296-316 (GAFG…SPCT), 337-357 (AATL…ITLF), 376-396 (FGFV…PEVW), 397-417 (EPRL…LQMS), and 420-440 (GFGY…VQPL). The 131-residue stretch at 449-579 (TTTQSAVENM…AFSNWLKALH (131 aa)) folds into the Thioredoxin domain. A disulfide bond links Cys495 and Cys498.

Belongs to the thioredoxin family. DsbD subfamily.

It localises to the cell inner membrane. The enzyme catalyses [protein]-dithiol + NAD(+) = [protein]-disulfide + NADH + H(+). It catalyses the reaction [protein]-dithiol + NADP(+) = [protein]-disulfide + NADPH + H(+). Its function is as follows. Required to facilitate the formation of correct disulfide bonds in some periplasmic proteins and for the assembly of the periplasmic c-type cytochromes. Acts by transferring electrons from cytoplasmic thioredoxin to the periplasm. This transfer involves a cascade of disulfide bond formation and reduction steps. This is Thiol:disulfide interchange protein DsbD from Haemophilus influenzae (strain 86-028NP).